A 452-amino-acid chain; its full sequence is Photoreceptor ankyrin repeat protein (452 aa).

ANK repeat units follow at residues Cys-94–Glu-123, Asn-130–Gln-160, Gly-164–Leu-193, and Arg-223–Gln-257. Disordered stretches follow at residues Leu-335 to Val-369 and Ser-405 to Ala-427. A compositionally biased stretch (pro residues) spans Ala-349–Ser-362. Over residues Lys-406–Gln-424 the composition is skewed to polar residues.

Its subcellular location is the cytoplasm. It is found in the cytosol. It localises to the nucleus. Its function is as follows. Acts as a transcriptional repressor for CRX-activated photoreceptor gene regulation. The polypeptide is Photoreceptor ankyrin repeat protein (Homo sapiens (Human)).